Reading from the N-terminus, the 361-residue chain is tRNA/tmRNA (uracil-C(5))-methyltransferase (361 aa).

Residues Gln185, Tyr213, Asn218, Glu234, and Asp294 each contribute to the S-adenosyl-L-methionine site. The Nucleophile role is filled by Cys319. Glu353 (proton acceptor) is an active-site residue.

It belongs to the class I-like SAM-binding methyltransferase superfamily. RNA M5U methyltransferase family. TrmA subfamily.

The catalysed reaction is uridine(54) in tRNA + S-adenosyl-L-methionine = 5-methyluridine(54) in tRNA + S-adenosyl-L-homocysteine + H(+). It carries out the reaction uridine(341) in tmRNA + S-adenosyl-L-methionine = 5-methyluridine(341) in tmRNA + S-adenosyl-L-homocysteine + H(+). Functionally, dual-specificity methyltransferase that catalyzes the formation of 5-methyluridine at position 54 (m5U54) in all tRNAs, and that of position 341 (m5U341) in tmRNA (transfer-mRNA). The polypeptide is tRNA/tmRNA (uracil-C(5))-methyltransferase (Pseudomonas putida (strain GB-1)).